The following is a 174-amino-acid chain: Calcium-binding protein F (174 aa).

EF-hand domains are found at residues 9 to 44, 60 to 83, 92 to 127, and 133 to 162; these read KIFQEVQKFVKNYDLNKDGSVTSFDIYRSFLKKMDG, VDMDHDGKFTYQEIAKYCADEAKK, AALADVEAMLLRFDKDKDKKLTKTEFVEYFKGNGHT, and DQVLKIIDLDKDGCVSANELQEWFKKRRID. Residues Asp22, Asn24, Asp26, Ser28, and Asp33 each coordinate Ca(2+). Ca(2+) is bound by residues Asp105, Asp107, Asp109, Lys111, Glu116, Asp140, Asp142, Asp144, Cys146, and Glu151.

This Dictyostelium discoideum (Social amoeba) protein is Calcium-binding protein F (cbpF).